The primary structure comprises 265 residues: Transcription factor LBX1 (265 aa).

The span at 1-20 (MTSKDEAKSSSVEERRRHAL) shows a compositional bias: basic and acidic residues. Residues 1–33 (MTSKDEAKSSSVEERRRHALDLLPPPANSNKPL) are disordered. Residues 125–184 (RRKSRTAFTNHQIYELEKRFLYQKYLSPADRDQIAQQLGLTNAQVITWFQNRRAKLKRDL) constitute a DNA-binding region (homeobox). The tract at residues 212–265 (EEETNSVRDDSRSRSPQLGLSGHMPLSPSSPLTEQHTSKECSEDEEDVEIDVDD) is disordered. The span at 253–265 (SEDEEDVEIDVDD) shows a compositional bias: acidic residues.

The protein localises to the nucleus. Transcription factor that controls hypaxial muscle development by down-regulating myod1 and cdkn1b/p27, thereby allowing myoblasts to proliferate before the onset of terminal differentiation. The polypeptide is Transcription factor LBX1 (Xenopus tropicalis (Western clawed frog)).